The following is a 484-amino-acid chain: Putative myrosinase 6 (484 aa).

Asn-28 carries N-linked (GlcNAc...) asparagine glycosylation. Residues Gln-39, His-140, and Asn-184–Gln-185 contribute to the a beta-D-glucoside site. Cys-204 and Cys-207 are oxidised to a cystine. N-linked (GlcNAc...) asparagine glycosylation is present at Asn-260. A beta-D-glucoside-binding positions include Tyr-321, Trp-440, Glu-447–Phe-448, and Phe-456. Residue Asn-462 is glycosylated (N-linked (GlcNAc...) asparagine).

Belongs to the glycosyl hydrolase 1 family.

It carries out the reaction a thioglucoside + H2O = a sugar + a thiol.. The chain is Putative myrosinase 6 from Arabidopsis thaliana (Mouse-ear cress).